The following is a 584-amino-acid chain: A-type ATP synthase subunit A (584 aa).

ATP is bound at residue 234 to 241 (GPFGSGKT).

This sequence belongs to the ATPase alpha/beta chains family. Has multiple subunits with at least A(3), B(3), C, D, E, F, H, I and proteolipid K(x).

It localises to the cell membrane. It catalyses the reaction ATP + H2O + 4 H(+)(in) = ADP + phosphate + 5 H(+)(out). Its function is as follows. Component of the A-type ATP synthase that produces ATP from ADP in the presence of a proton gradient across the membrane. The A chain is the catalytic subunit. The chain is A-type ATP synthase subunit A from Methanoculleus marisnigri (strain ATCC 35101 / DSM 1498 / JR1).